We begin with the raw amino-acid sequence, 310 residues long: Inner membrane protein YfdC (310 aa).

Residues 1–12 (MDNDKIDQHSDE) show a composition bias toward basic and acidic residues. Residues 1 to 27 (MDNDKIDQHSDEIEVESEEKERGKKIE) form a disordered region. Residues 1-58 (MDNDKIDQHSDEIEVESEEKERGKKIEIDEDRLPSRAMAIHEHIRQDGEKELERDAMA) lie on the Cytoplasmic side of the membrane. Residues 59–81 (LLWSAIAAGLSMGASLLAKGIFQ) form a helical membrane-spanning segment. The Periplasmic portion of the chain corresponds to 82-90 (VELEGVPGS). The chain crosses the membrane as a helical span at residues 91 to 113 (FLLENLGYTFGFIIVIMARQQLF). Residues 114 to 133 (TENTVTAVLPVMQKPTMSNV) lie on the Cytoplasmic side of the membrane. A helical transmembrane segment spans residues 134 to 156 (GLLIRLWGVVLLGNILGTGIAAW). Topologically, residues 157-186 (AFEYMPIFNEETRDAFVKIGMDVMKNTPSE) are periplasmic. A helical membrane pass occupies residues 187 to 206 (MFANAIISGWLIATMVWMFP). Topologically, residues 207 to 212 (AAGAAK) are cytoplasmic. Residues 213 to 232 (IVVIILMTWLIALGDTTHIV) form a helical membrane-spanning segment. Topologically, residues 233 to 251 (VGSVEILYLVFNGTLHWSD) are periplasmic. A helical transmembrane segment spans residues 252-274 (FIWPFALPTLAGNICGGTFIFAL). Topologically, residues 275–310 (MSHAQIRNDMSNKRKAEARQKAERAENIKKNYKNPA) are cytoplasmic. Residues 291–303 (EARQKAERAENIK) are compositionally biased toward basic and acidic residues. Positions 291 to 310 (EARQKAERAENIKKNYKNPA) are disordered.

It localises to the cell inner membrane. The protein is Inner membrane protein YfdC (yfdC) of Escherichia coli (strain K12).